The primary structure comprises 448 residues: MGKYFGTDGVRGVANKELTPELAFKIGRFGGYVLTKDTDRPKVIIGRDTRVSGHMLEGALVAGLLSTGAEVMRLGVISTPGVAYLTKALGAQAGVMISASHNPVQDNGIKFFGSDGFKLTDEQEAEIEALLDKEVDELPRPTGTNLGQVSDYFEGGQKYLQYIKQTVEEDFSGLHIALDCAHGATSSLAPYLFADLEADISTMGTSPNGMNINAGVGSTHPEVLAELVKEKGADIGLAFDGDGDRLIAVDEKGNIVDGDQIMFICAKYMKETGQLKHNTVVSTVMSNLGFYKALEANNITSDKTAVGDRYVMEEMKRGGYNLGGEQSGHIILLDYITTGDGMLSALQLVNIMKMTKKPLSELAGEMTKFPQLLVNVRVTDKKLALENEKIKEIIRVVEEEMNGDGRILVRPSGTEPLIRVMAEAPTQEICDGYVHRIVEVVKAEVGAE.

Ser100 (phosphoserine intermediate) is an active-site residue. Residues Ser100, Asp240, Asp242, and Asp244 each coordinate Mg(2+). Ser100 is subject to Phosphoserine.

Belongs to the phosphohexose mutase family. Mg(2+) is required as a cofactor. Post-translationally, activated by phosphorylation.

The enzyme catalyses alpha-D-glucosamine 1-phosphate = D-glucosamine 6-phosphate. Catalyzes the conversion of glucosamine-6-phosphate to glucosamine-1-phosphate. The protein is Phosphoglucosamine mutase of Bacillus mycoides (strain KBAB4) (Bacillus weihenstephanensis).